A 202-amino-acid chain; its full sequence is Probable nicotinate-nucleotide adenylyltransferase (202 aa).

The protein belongs to the NadD family.

It catalyses the reaction nicotinate beta-D-ribonucleotide + ATP + H(+) = deamido-NAD(+) + diphosphate. Its pathway is cofactor biosynthesis; NAD(+) biosynthesis; deamido-NAD(+) from nicotinate D-ribonucleotide: step 1/1. Functionally, catalyzes the reversible adenylation of nicotinate mononucleotide (NaMN) to nicotinic acid adenine dinucleotide (NaAD). The polypeptide is Probable nicotinate-nucleotide adenylyltransferase (Clostridium perfringens (strain 13 / Type A)).